A 319-amino-acid polypeptide reads, in one-letter code: 4-diphosphocytidyl-2-C-methyl-D-erythritol kinase (319 aa).

The active site involves Lys-18. Residue 103-113 participates in ATP binding; that stretch reads PIGAGLAGGST. The active site involves Asp-145.

Belongs to the GHMP kinase family. IspE subfamily.

It carries out the reaction 4-CDP-2-C-methyl-D-erythritol + ATP = 4-CDP-2-C-methyl-D-erythritol 2-phosphate + ADP + H(+). It participates in isoprenoid biosynthesis; isopentenyl diphosphate biosynthesis via DXP pathway; isopentenyl diphosphate from 1-deoxy-D-xylulose 5-phosphate: step 3/6. In terms of biological role, catalyzes the phosphorylation of the position 2 hydroxy group of 4-diphosphocytidyl-2C-methyl-D-erythritol. The chain is 4-diphosphocytidyl-2-C-methyl-D-erythritol kinase from Prochlorococcus marinus (strain NATL2A).